The chain runs to 191 residues: Protein GrpE (191 aa).

Belongs to the GrpE family. Homodimer.

Its subcellular location is the cytoplasm. In terms of biological role, participates actively in the response to hyperosmotic and heat shock by preventing the aggregation of stress-denatured proteins, in association with DnaK and GrpE. It is the nucleotide exchange factor for DnaK and may function as a thermosensor. Unfolded proteins bind initially to DnaJ; upon interaction with the DnaJ-bound protein, DnaK hydrolyzes its bound ATP, resulting in the formation of a stable complex. GrpE releases ADP from DnaK; ATP binding to DnaK triggers the release of the substrate protein, thus completing the reaction cycle. Several rounds of ATP-dependent interactions between DnaJ, DnaK and GrpE are required for fully efficient folding. This chain is Protein GrpE, found in Listeria monocytogenes serotype 4b (strain CLIP80459).